We begin with the raw amino-acid sequence, 76 residues long: Tautomerase PptA (76 aa).

P2 (proton acceptor; via imino nitrogen) is an active-site residue.

It belongs to the 4-oxalocrotonate tautomerase family. PptA subfamily. In terms of assembly, homodimer.

It is found in the cytoplasm. The sequence is that of Tautomerase PptA from Enterobacter sp. (strain 638).